A 485-amino-acid polypeptide reads, in one-letter code: Aspartyl/glutamyl-tRNA(Asn/Gln) amidotransferase subunit B (485 aa).

It belongs to the GatB/GatE family. GatB subfamily. Heterotrimer of A, B and C subunits.

It carries out the reaction L-glutamyl-tRNA(Gln) + L-glutamine + ATP + H2O = L-glutaminyl-tRNA(Gln) + L-glutamate + ADP + phosphate + H(+). The catalysed reaction is L-aspartyl-tRNA(Asn) + L-glutamine + ATP + H2O = L-asparaginyl-tRNA(Asn) + L-glutamate + ADP + phosphate + 2 H(+). Its function is as follows. Allows the formation of correctly charged Asn-tRNA(Asn) or Gln-tRNA(Gln) through the transamidation of misacylated Asp-tRNA(Asn) or Glu-tRNA(Gln) in organisms which lack either or both of asparaginyl-tRNA or glutaminyl-tRNA synthetases. The reaction takes place in the presence of glutamine and ATP through an activated phospho-Asp-tRNA(Asn) or phospho-Glu-tRNA(Gln). The polypeptide is Aspartyl/glutamyl-tRNA(Asn/Gln) amidotransferase subunit B (Borrelia duttonii (strain Ly)).